A 614-amino-acid chain; its full sequence is ATP-dependent zinc metalloprotease FtsH (614 aa).

The Stromal segment spans residues 1 to 7 (MKKQWKK). A helical transmembrane segment spans residues 8–28 (IVLFVLPVIITLITLSSFLFY). Topologically, residues 29-116 (NQDVVHNWSS…AHPSSSNVNL (88 aa)) are lumenal. Residues 117–137 (VSWLSNLLLPLILIITLFFFF) form a helical membrane-spanning segment. Residues 138–614 (RRGNKSSSGP…EFMRIVEERV (477 aa)) are Stromal-facing. 211 to 218 (GPPGTGKT) provides a ligand contact to ATP. His432 lines the Zn(2+) pocket. The active site involves Glu433. Zn(2+) is bound by residues His436 and Asp510.

In the central section; belongs to the AAA ATPase family. The protein in the C-terminal section; belongs to the peptidase M41 family. In terms of assembly, homohexamer. Requires Zn(2+) as cofactor.

Its subcellular location is the plastid. It is found in the chloroplast thylakoid membrane. In terms of biological role, acts as a processive, ATP-dependent zinc metallopeptidase. In Cyanidium caldarium (Red alga), this protein is ATP-dependent zinc metalloprotease FtsH.